The primary structure comprises 435 residues: Serine--tRNA ligase (435 aa).

The segment at 48-68 (MKAQRNEASKKIGEAKRNGES) is disordered. Over residues 49–68 (KAQRNEASKKIGEAKRNGES) the composition is skewed to basic and acidic residues. Residue 230-232 (TAE) coordinates L-serine. 261-263 (RSE) is an ATP binding site. L-serine is bound at residue E284. 348–351 (EVSS) provides a ligand contact to ATP. S383 contacts L-serine.

This sequence belongs to the class-II aminoacyl-tRNA synthetase family. Type-1 seryl-tRNA synthetase subfamily. Homodimer. The tRNA molecule binds across the dimer.

The protein resides in the cytoplasm. It carries out the reaction tRNA(Ser) + L-serine + ATP = L-seryl-tRNA(Ser) + AMP + diphosphate + H(+). The enzyme catalyses tRNA(Sec) + L-serine + ATP = L-seryl-tRNA(Sec) + AMP + diphosphate + H(+). It participates in aminoacyl-tRNA biosynthesis; selenocysteinyl-tRNA(Sec) biosynthesis; L-seryl-tRNA(Sec) from L-serine and tRNA(Sec): step 1/1. Catalyzes the attachment of serine to tRNA(Ser). Is also able to aminoacylate tRNA(Sec) with serine, to form the misacylated tRNA L-seryl-tRNA(Sec), which will be further converted into selenocysteinyl-tRNA(Sec). The sequence is that of Serine--tRNA ligase from Limosilactobacillus reuteri (strain DSM 20016) (Lactobacillus reuteri).